The chain runs to 103 residues: Flagellar hook-basal body complex protein FliE (103 aa).

Belongs to the FliE family.

The protein resides in the bacterial flagellum basal body. This chain is Flagellar hook-basal body complex protein FliE, found in Erwinia tasmaniensis (strain DSM 17950 / CFBP 7177 / CIP 109463 / NCPPB 4357 / Et1/99).